We begin with the raw amino-acid sequence, 245 residues long: Probable transcriptional regulatory protein Ddes_0536 (245 aa).

A disordered region spans residues 1 to 21 (MAGHSKWANIQHRKGRQDAKR).

Belongs to the TACO1 family.

Its subcellular location is the cytoplasm. In Desulfovibrio desulfuricans (strain ATCC 27774 / DSM 6949 / MB), this protein is Probable transcriptional regulatory protein Ddes_0536.